The sequence spans 155 residues: PBAN-type neuropeptides (155 aa).

At Ile8 the chain carries Isoleucine amide. Positions 12–55 are excised as a propeptide; the sequence is SLRMATEDNRQAFFKLLEAADALKYYYDQLPYEMQADEPETRVT. Leu64, Leu84, Leu120, and Leu130 each carry leucine amide. The propeptide occupies 133 to 155; the sequence is ELAYEMVPSKIRVVRSTNKTQST.

This sequence belongs to the pyrokinin family.

It is found in the secreted. In terms of biological role, a hormone that controls sex pheromone production in females and pheromone responsiveness in male. Also mediates visceral muscle contractile activity (myotropic activity). The chain is PBAN-type neuropeptides (PBAN) from Mamestra brassicae (Cabbage moth).